We begin with the raw amino-acid sequence, 414 residues long: Esterase FrsA (414 aa).

It belongs to the FrsA family.

The catalysed reaction is a carboxylic ester + H2O = an alcohol + a carboxylate + H(+). Functionally, catalyzes the hydrolysis of esters. In Shigella dysenteriae serotype 1 (strain Sd197), this protein is Esterase FrsA.